A 250-amino-acid chain; its full sequence is MARLILLRHGQSAWNLENRFTGWTDVDLSPAGEAEALAAARLIRDEGLDFSVCHTSMLTRAIRTLHLVQHELDRLWTPVRKHWRLNERHYGALQGLDKRETAARHGEDQVFVWRRSYDVPPPVIAPDDPKHPVHDPRYADVPPDVLPCGESLEATVARVLPYWYDAIAPDLMAGRDVLVAAHGNSLRALVMHLDGLDREAVSRLDIPTGLPRLYELDAALRPVSYRYLGDPAEAEERARAVAAQGRLEKN.

Substrate-binding positions include 8-15 (RHGQSAWN), 21-22 (TG), Arg60, 87-90 (ERHY), Lys98, 114-115 (RR), and 183-184 (GN). The Tele-phosphohistidine intermediate role is filled by His9. Catalysis depends on Glu87, which acts as the Proton donor/acceptor.

Belongs to the phosphoglycerate mutase family. BPG-dependent PGAM subfamily. As to quaternary structure, homodimer.

It catalyses the reaction (2R)-2-phosphoglycerate = (2R)-3-phosphoglycerate. It participates in carbohydrate degradation; glycolysis; pyruvate from D-glyceraldehyde 3-phosphate: step 3/5. Its function is as follows. Catalyzes the interconversion of 2-phosphoglycerate and 3-phosphoglycerate. This chain is 2,3-bisphosphoglycerate-dependent phosphoglycerate mutase, found in Nitratidesulfovibrio vulgaris (strain DP4) (Desulfovibrio vulgaris).